A 298-amino-acid chain; its full sequence is Esterase Rv0045c (298 aa).

The active-site Nucleophile is the serine 122. Residues aspartate 146 and histidine 277 contribute to the active site.

Belongs to the AB hydrolase superfamily. In terms of assembly, monomer.

The enzyme catalyses a carboxylic ester + H2O = an alcohol + a carboxylate + H(+). It catalyses the reaction a butanoate ester + H2O = an aliphatic alcohol + butanoate + H(+). It carries out the reaction an acetyl ester + H2O = an aliphatic alcohol + acetate + H(+). The catalysed reaction is a hexanoate ester + H2O = an aliphatic alcohol + hexanoate + H(+). The enzyme catalyses a tetradecanoate ester + H2O = an aliphatic alcohol + tetradecanoate + H(+). Hydrolysis of a fluorogenic ester substrate (MOAME) is allosterically inhibited by divalent transition metal cations (Cu(2+), Zn(2+), Ni(2+) and Co(2+)). Inhibition is largely due to a two order of magnitude drop in kcat, with relatively little change in KM. The thermal stability decreases with increasing concentrations of Ni(2+). In terms of biological role, esterase likely involved in ester/lipid metabolism. Shows strong substrate selectivity toward short, straight chain alkyl esters with the highest activity toward four atom chains. The physiological substrate is unknown. Is able to hydrolyze ester bonds within a wide range of p-nitrophenyl derivatives (C2-C14) in vitro. This chain is Esterase Rv0045c, found in Mycobacterium tuberculosis (strain ATCC 25618 / H37Rv).